Here is a 160-residue protein sequence, read N- to C-terminus: Adenosine 5'-monophosphoramidase HINT3 (160 aa).

The 109-residue stretch at 24-132 folds into the HIT domain; that stretch reads IFCTIAKGDD…LAPYSQLYKW (109 aa). Residues 50–51 and 119–121 contribute to the AMP site; these read DI and HLH. The short motif at 117–121 is the Histidine triad motif element; sequence HLHLH. The active-site Tele-AMP-histidine intermediate is the H119.

This sequence belongs to the HINT family. As to quaternary structure, forms dimers to octamers and even larger oligomer.

It localises to the cytoplasm. It is found in the nucleus. It carries out the reaction adenosine 5'-phosphoramidate + H2O = AMP + NH4(+). In terms of biological role, exhibits adenosine 5'-monophosphoramidase activity, hydrolyzing purine nucleotide phosphoramidates with a single phosphate group such as adenosine 5'monophosphoramidate (AMP-NH2) to yield AMP and NH2. Hydrolyzes lysyl-AMP (AMP-N-epsilon-(N-alpha-acetyl lysine methyl ester)) generated by lysine tRNA ligase. The polypeptide is Adenosine 5'-monophosphoramidase HINT3 (hint3) (Danio rerio (Zebrafish)).